The chain runs to 109 residues: Flowering-promoting factor 1-like protein 1 (109 aa).

A D-box motif is present at residues 73 to 81; that stretch reads RGSLDLISL.

This sequence belongs to the FPF1 family. In terms of assembly, interacts with RPT4. Post-translationally, ubiquitinated. RPT4 mediates its proteasome-dependent degradation. Specifically expressed in the apical meristem, the elongation zone of root tip, steles of the branch zone, and the young lateral root. Also expressed in spikes. Expressed in roots and spikes (at protein level).

The protein resides in the cytoplasm. It localises to the nucleus. Its function is as follows. GTP-binding protein that functions in the development of root systems, which are mediated by auxin. Acts as a cell cycle regulator during root development. Proteasome-mediated degradation of the protein is necessary for the transition of metaphase to anaphase in mitosis. The chain is Flowering-promoting factor 1-like protein 1 (RAA1) from Oryza sativa subsp. japonica (Rice).